The sequence spans 64 residues: Translation machinery-associated protein 7 homolog (64 aa).

Residues 1 to 64 (MSGREGGKKK…QGGIKKSGKK (64 aa)) form a disordered region. Residues 27–44 (VAFKQKQKEQQKALDAAK) are compositionally biased toward basic and acidic residues.

This sequence belongs to the TMA7 family.

This is Translation machinery-associated protein 7 homolog from Anopheles funestus (African malaria mosquito).